We begin with the raw amino-acid sequence, 261 residues long: Prostate-specific antigen (261 aa).

A signal peptide spans 1–17 (MWVPVVFLTLSVTWIGA). The propeptide at 18–24 (APLILSR) is activation peptide. The Peptidase S1 domain maps to 25 to 258 (IVGGWECEKH…YRKWIKDTIV (234 aa)). Disulfide bonds link Cys-31-Cys-173, Cys-50-Cys-66, Cys-152-Cys-219, Cys-184-Cys-198, and Cys-209-Cys-234. Residue His-65 is the Charge relay system of the active site. A glycan (N-linked (GlcNAc...) asparagine) is linked at Asn-69. The active-site Charge relay system is Asp-120. The active-site Charge relay system is the Ser-213.

This sequence belongs to the peptidase S1 family. Kallikrein subfamily. As to quaternary structure, forms a heterodimer with SERPINA5.

The protein localises to the secreted. It carries out the reaction Preferential cleavage: -Tyr-|-Xaa-.. Its activity is regulated as follows. Inhibited by SERPINA5. Activity is strongly inhibited by Zn2+, 100 times more abundant in semen than in serum. This inhibition is relieved by exposure to semenogelins, which are avid zinc binders. Hydrolyzes semenogelin-1 thus leading to the liquefaction of the seminal coagulum. This chain is Prostate-specific antigen (KLK3), found in Homo sapiens (Human).